We begin with the raw amino-acid sequence, 775 residues long: Phosphoribosylformylglycinamidine synthase subunit PurL (775 aa).

Residue histidine 81 is part of the active site. Residues tyrosine 84 and lysine 123 each coordinate ATP. Glutamate 125 lines the Mg(2+) pocket. Residues 126–129 (SHNH) and arginine 148 each bind substrate. Residue histidine 127 is the Proton acceptor of the active site. Aspartate 149 is a binding site for Mg(2+). Glutamine 272 serves as a coordination point for substrate. Aspartate 300 serves as a coordination point for Mg(2+). 344 to 346 (ESQ) contacts substrate. ATP contacts are provided by aspartate 525 and glycine 562. Asparagine 563 provides a ligand contact to Mg(2+). Position 565 (serine 565) interacts with substrate.

It belongs to the FGAMS family. Monomer. Part of the FGAM synthase complex composed of 1 PurL, 1 PurQ and 2 PurS subunits.

Its subcellular location is the cytoplasm. It carries out the reaction N(2)-formyl-N(1)-(5-phospho-beta-D-ribosyl)glycinamide + L-glutamine + ATP + H2O = 2-formamido-N(1)-(5-O-phospho-beta-D-ribosyl)acetamidine + L-glutamate + ADP + phosphate + H(+). It functions in the pathway purine metabolism; IMP biosynthesis via de novo pathway; 5-amino-1-(5-phospho-D-ribosyl)imidazole from N(2)-formyl-N(1)-(5-phospho-D-ribosyl)glycinamide: step 1/2. In terms of biological role, part of the phosphoribosylformylglycinamidine synthase complex involved in the purines biosynthetic pathway. Catalyzes the ATP-dependent conversion of formylglycinamide ribonucleotide (FGAR) and glutamine to yield formylglycinamidine ribonucleotide (FGAM) and glutamate. The FGAM synthase complex is composed of three subunits. PurQ produces an ammonia molecule by converting glutamine to glutamate. PurL transfers the ammonia molecule to FGAR to form FGAM in an ATP-dependent manner. PurS interacts with PurQ and PurL and is thought to assist in the transfer of the ammonia molecule from PurQ to PurL. This Agrobacterium fabrum (strain C58 / ATCC 33970) (Agrobacterium tumefaciens (strain C58)) protein is Phosphoribosylformylglycinamidine synthase subunit PurL.